The following is a 154-amino-acid chain: MGKISSLPTQLFKCCFCDFLKQVKMPVTSSSHLFYLALCLLAFSSSATAGPETLCGAELVDALQFVCGDRGFYFNKPTGYGSSSRRAPQTGIVDECCFRSCDLRRLEMYCAPLKAAKSARSVRAQRHTDMPKAQKEVHLKNTSRGSAGNKNYRM.

Residues 50-78 (GPETLCGAELVDALQFVCGDRGFYFNKPT) are b. 3 disulfides stabilise this stretch: Cys-55/Cys-97, Cys-67/Cys-110, and Cys-96/Cys-101. Residues 79–90 (GYGSSSRRAPQT) form a c region. The segment at 91-111 (GIVDECCFRSCDLRRLEMYCA) is a. The tract at residues 112 to 119 (PLKAAKSA) is d. A propeptide spans 120-154 (RSVRAQRHTDMPKAQKEVHLKNTSRGSAGNKNYRM) (e peptide). Residues 121–154 (SVRAQRHTDMPKAQKEVHLKNTSRGSAGNKNYRM) form a disordered region. A compositionally biased stretch (basic and acidic residues) spans 126-139 (RHTDMPKAQKEVHL). The span at 140–154 (KNTSRGSAGNKNYRM) shows a compositional bias: polar residues.

The protein belongs to the insulin family. As to quaternary structure, forms a ternary complex with IGFR1 and ITGAV:ITGB3. Forms a ternary complex with IGFR1 and ITGA6:ITGB4. Forms a ternary complex with IGFBP3 and ALS.

The protein resides in the secreted. The insulin-like growth factors, isolated from plasma, are structurally and functionally related to insulin but have a much higher growth-promoting activity. May be a physiological regulator of [1-14C]-2-deoxy-D-glucose (2DG) transport and glycogen synthesis in osteoblasts. Stimulates glucose transport in bone-derived osteoblastic (PyMS) cells and is effective at much lower concentrations than insulin, not only regarding glycogen and DNA synthesis but also with regard to enhancing glucose uptake. May play a role in synapse maturation. Ca(2+)-dependent exocytosis of IGF1 is required for sensory perception of smell in the olfactory bulb. Acts as a ligand for IGF1R. Binds to the alpha subunit of IGF1R, leading to the activation of the intrinsic tyrosine kinase activity which autophosphorylates tyrosine residues in the beta subunit thus initiating a cascade of down-stream signaling events leading to activation of the PI3K-AKT/PKB and the Ras-MAPK pathways. Binds to integrins ITGAV:ITGB3 and ITGA6:ITGB4. Its binding to integrins and subsequent ternary complex formation with integrins and IGFR1 are essential for IGF1 signaling. Induces the phosphorylation and activation of IGFR1, MAPK3/ERK1, MAPK1/ERK2 and AKT1. As part of the MAPK/ERK signaling pathway, acts as a negative regulator of apoptosis in cardiomyocytes via promotion of STUB1/CHIP-mediated ubiquitination and degradation of ICER-type isoforms of CREM. This is Insulin-like growth factor 1 from Ovis aries (Sheep).